The chain runs to 352 residues: Phenylalanine--tRNA ligase alpha subunit (352 aa).

Glu258 is a Mg(2+) binding site.

It belongs to the class-II aminoacyl-tRNA synthetase family. Phe-tRNA synthetase alpha subunit type 1 subfamily. As to quaternary structure, tetramer of two alpha and two beta subunits. Requires Mg(2+) as cofactor.

Its subcellular location is the cytoplasm. The enzyme catalyses tRNA(Phe) + L-phenylalanine + ATP = L-phenylalanyl-tRNA(Phe) + AMP + diphosphate + H(+). The polypeptide is Phenylalanine--tRNA ligase alpha subunit (Staphylococcus aureus (strain bovine RF122 / ET3-1)).